The primary structure comprises 224 residues: PKHD-type hydroxylase HNE_1625 (224 aa).

The region spanning 77–175 (KFAPPLISCS…RFVFVGWIQS (99 aa)) is the Fe2OG dioxygenase domain. 3 residues coordinate Fe cation: His-95, Asp-97, and His-156. Arg-166 is a binding site for 2-oxoglutarate.

Fe(2+) is required as a cofactor. The cofactor is L-ascorbate.

This Hyphomonas neptunium (strain ATCC 15444) protein is PKHD-type hydroxylase HNE_1625.